We begin with the raw amino-acid sequence, 392 residues long: Integrin-linked kinase-associated serine/threonine phosphatase 2C (392 aa).

At methionine 1 the chain carries N-acetylmethionine. Residues 1–91 (MDLFGDLPEP…PEEEKNGGEE (91 aa)) form a disordered region. Residues 31–40 (DLPPTSSTDS) show a composition bias toward low complexity. Polar residues predominate over residues 59–70 (SGSLATSGSQVV). Basic and acidic residues predominate over residues 72-91 (NEGKGAKRKAPEEEKNGGEE). The PPM-type phosphatase domain occupies 108-390 (KGYVAERKGE…DNVTVMVVRI (283 aa)). Residues aspartate 152 and glycine 153 each contribute to the Mn(2+) site. An N6-acetyllysine modification is found at lysine 210. Residues aspartate 326 and aspartate 381 each contribute to the Mn(2+) site.

The protein belongs to the PP2C family. Interacts with ILK. It depends on Mg(2+) as a cofactor. The cofactor is Mn(2+). In terms of tissue distribution, widely expressed. Highest expression observed in kidney, liver and muscle.

The protein resides in the cytoplasm. It carries out the reaction O-phospho-L-seryl-[protein] + H2O = L-seryl-[protein] + phosphate. The catalysed reaction is O-phospho-L-threonyl-[protein] + H2O = L-threonyl-[protein] + phosphate. Functionally, protein phosphatase that may play a role in regulation of cell cycle progression via dephosphorylation of its substrates whose appropriate phosphorylation states might be crucial for cell proliferation. Selectively associates with integrin linked kinase (ILK), to modulate cell adhesion and growth factor signaling. Inhibits the ILK-GSK3B signaling axis and may play an important role in inhibiting oncogenic transformation. This chain is Integrin-linked kinase-associated serine/threonine phosphatase 2C (Ilkap), found in Rattus norvegicus (Rat).